The chain runs to 1154 residues: FERM domain-containing protein A (1154 aa).

Disordered regions lie at residues 122–149 (NNNS…SSSS), 432–468 (NLSS…NHHN), 715–734 (NKNN…SSSS), 771–794 (SNSN…TSSS), and 961–980 (TNGS…NNGI). FERM domains follow at residues 218-547 (PLHQ…PSIQ) and 666-1103 (REIV…QTKL). Residues 437-447 (GGSGNGSGSGN) are compositionally biased toward gly residues. Positions 448–463 (GSSSSSSNSSSGNNNN) are enriched in low complexity.

Functionally, key regulator of adhesion dynamics, it acts as an anti-adhesive. Plays a critical role in the regulation of cell-cell adhesion, multi-cellular development and, in particular, the formation of the organising center known as the tip. Required for turnover of paxillin-adhesion sites during cell migration. Plays a major role in normal cell shape, cell-substrate adhesion and actin cytoskeleton organization. This chain is FERM domain-containing protein A (frmA), found in Dictyostelium discoideum (Social amoeba).